The chain runs to 298 residues: 4-diphosphocytidyl-2-C-methyl-D-erythritol kinase (298 aa).

Lys-15 is a catalytic residue. Residue 100 to 110 coordinates ATP; the sequence is PIAAGIGGGSA. Asp-142 is a catalytic residue.

The protein belongs to the GHMP kinase family. IspE subfamily.

The enzyme catalyses 4-CDP-2-C-methyl-D-erythritol + ATP = 4-CDP-2-C-methyl-D-erythritol 2-phosphate + ADP + H(+). It functions in the pathway isoprenoid biosynthesis; isopentenyl diphosphate biosynthesis via DXP pathway; isopentenyl diphosphate from 1-deoxy-D-xylulose 5-phosphate: step 3/6. Functionally, catalyzes the phosphorylation of the position 2 hydroxy group of 4-diphosphocytidyl-2C-methyl-D-erythritol. The polypeptide is 4-diphosphocytidyl-2-C-methyl-D-erythritol kinase (Rhodopseudomonas palustris (strain BisA53)).